Here is a 343-residue protein sequence, read N- to C-terminus: ATP-dependent 6-phosphofructokinase (343 aa).

ATP-binding positions include glycine 10 and glycine 103–threonine 106. Glutamate 104 is a binding site for Mg(2+). Substrate-binding positions include threonine 126 to aspartate 128, arginine 163, methionine 170 to arginine 172, glutamate 223, arginine 267, and histidine 273 to arginine 276. The active-site Proton acceptor is the aspartate 128.

The protein belongs to the phosphofructokinase type A (PFKA) family. Mixed-substrate PFK group III subfamily. In terms of assembly, homodimer or homotetramer. It depends on Mg(2+) as a cofactor.

It localises to the cytoplasm. It carries out the reaction beta-D-fructose 6-phosphate + ATP = beta-D-fructose 1,6-bisphosphate + ADP + H(+). It participates in carbohydrate degradation; glycolysis; D-glyceraldehyde 3-phosphate and glycerone phosphate from D-glucose: step 3/4. In terms of biological role, catalyzes the phosphorylation of D-fructose 6-phosphate to fructose 1,6-bisphosphate by ATP, the first committing step of glycolysis. The sequence is that of ATP-dependent 6-phosphofructokinase from Mycobacterium leprae (strain TN).